The primary structure comprises 319 residues: MENFPIINLEKLNGSERADTMEMIKDACENWGFFELVNHGIPHEVMDTVEKMTKGHYKKCMEQRFKELVASKGLEAVQAEVTDLDWESTFFLRHLPVSNICEVPDLDDQYREVMRDFAKRLEKLAEELLDLLCENLGLEKGYLKKIFYGTKGPNFGSKVSNYPPCPKPDLIKGLRAHTDAGGIILLFQDDKVTGLQLLKDGQWIDVPPMRLSIVVNLGDQLEVITNGKYKSVMHRVITQTDGTRMSLASFYNPGSDAVIFPAPTLVEKEAEESKAIYPKFVFDDYMKLYAGLKFQAKEPRFEAMIKAMETVKSDPVATA.

Positions 152-253 constitute a Fe2OG dioxygenase domain; the sequence is GPNFGSKVSN…RMSLASFYNP (102 aa). Fe cation is bound by residues H177, D179, and H234.

Belongs to the iron/ascorbate-dependent oxidoreductase family. It depends on Fe cation as a cofactor.

The catalysed reaction is 1-aminocyclopropane-1-carboxylate + L-ascorbate + O2 = ethene + L-dehydroascorbate + hydrogen cyanide + CO2 + 2 H2O. It functions in the pathway alkene biosynthesis; ethylene biosynthesis via S-adenosyl-L-methionine; ethylene from S-adenosyl-L-methionine: step 2/2. This Nicotiana tabacum (Common tobacco) protein is 1-aminocyclopropane-1-carboxylate oxidase (ACO).